A 641-amino-acid chain; its full sequence is Fructose-1,6-bisphosphatase class 3 (641 aa).

The protein belongs to the FBPase class 3 family. It depends on Mn(2+) as a cofactor.

The catalysed reaction is beta-D-fructose 1,6-bisphosphate + H2O = beta-D-fructose 6-phosphate + phosphate. It functions in the pathway carbohydrate biosynthesis; gluconeogenesis. The polypeptide is Fructose-1,6-bisphosphatase class 3 (Ligilactobacillus salivarius (strain UCC118) (Lactobacillus salivarius)).